Here is a 210-residue protein sequence, read N- to C-terminus: Thymidylate kinase (210 aa).

10–17 (GLEGAGKS) contributes to the ATP binding site.

Belongs to the thymidylate kinase family.

It carries out the reaction dTMP + ATP = dTDP + ADP. Functionally, phosphorylation of dTMP to form dTDP in both de novo and salvage pathways of dTTP synthesis. This chain is Thymidylate kinase, found in Haemophilus influenzae (strain PittEE).